A 506-amino-acid polypeptide reads, in one-letter code: Lysine--tRNA ligase (506 aa).

Mg(2+)-binding residues include E416 and E423.

It belongs to the class-II aminoacyl-tRNA synthetase family. Homodimer. Requires Mg(2+) as cofactor.

It localises to the cytoplasm. The enzyme catalyses tRNA(Lys) + L-lysine + ATP = L-lysyl-tRNA(Lys) + AMP + diphosphate. The protein is Lysine--tRNA ligase of Xylella fastidiosa (strain M23).